The following is a 288-amino-acid chain: Bifunctional protein FolD (288 aa).

NADP(+)-binding positions include 166–168 (GRS), serine 191, and isoleucine 232.

The protein belongs to the tetrahydrofolate dehydrogenase/cyclohydrolase family. As to quaternary structure, homodimer.

It catalyses the reaction (6R)-5,10-methylene-5,6,7,8-tetrahydrofolate + NADP(+) = (6R)-5,10-methenyltetrahydrofolate + NADPH. The enzyme catalyses (6R)-5,10-methenyltetrahydrofolate + H2O = (6R)-10-formyltetrahydrofolate + H(+). Its pathway is one-carbon metabolism; tetrahydrofolate interconversion. In terms of biological role, catalyzes the oxidation of 5,10-methylenetetrahydrofolate to 5,10-methenyltetrahydrofolate and then the hydrolysis of 5,10-methenyltetrahydrofolate to 10-formyltetrahydrofolate. The chain is Bifunctional protein FolD from Rickettsia canadensis (strain McKiel).